The primary structure comprises 250 residues: NAD-dependent protein deacylase (250 aa).

A Deacetylase sirtuin-type domain is found at methionine 1–isoleucine 248. Glycine 20–tryptophan 39 serves as a coordination point for NAD(+). Tyrosine 64 and arginine 67 together coordinate substrate. Glutamine 98–aspartate 101 is a binding site for NAD(+). Histidine 116 serves as the catalytic Proton acceptor. Residues cysteine 124, cysteine 127, cysteine 150, and cysteine 153 each coordinate Zn(2+). Residues glycine 190–serine 192, asparagine 216–glutamate 218, and alanine 234 contribute to the NAD(+) site.

The protein belongs to the sirtuin family. Class III subfamily. Requires Zn(2+) as cofactor.

It localises to the cytoplasm. The enzyme catalyses N(6)-acetyl-L-lysyl-[protein] + NAD(+) + H2O = 2''-O-acetyl-ADP-D-ribose + nicotinamide + L-lysyl-[protein]. It catalyses the reaction N(6)-succinyl-L-lysyl-[protein] + NAD(+) + H2O = 2''-O-succinyl-ADP-D-ribose + nicotinamide + L-lysyl-[protein]. Functionally, NAD-dependent lysine deacetylase and desuccinylase that specifically removes acetyl and succinyl groups on target proteins. Modulates the activities of several proteins which are inactive in their acylated form. Deacetylates the N-terminal lysine residue of Alba, the major archaeal chromatin protein and that, in turn, increases Alba's DNA binding affinity, thereby repressing transcription. The chain is NAD-dependent protein deacylase from Pyrococcus furiosus (strain ATCC 43587 / DSM 3638 / JCM 8422 / Vc1).